The sequence spans 207 residues: Outer-membrane lipoprotein LolB (207 aa).

Residues 1–23 form the signal peptide; sequence MPTMNRSRRLALLCLGAPLLLAA. Residue Cys-24 is the site of N-palmitoyl cysteine attachment. Cys-24 is lipidated: S-diacylglycerol cysteine. Positions 171–207 are disordered; sequence PSASQAPAPRPRRIDLEREGGPTPLAVKLVIDPEEAP.

This sequence belongs to the LolB family. Monomer.

It is found in the cell outer membrane. Functionally, plays a critical role in the incorporation of lipoproteins in the outer membrane after they are released by the LolA protein. This Cupriavidus pinatubonensis (strain JMP 134 / LMG 1197) (Cupriavidus necator (strain JMP 134)) protein is Outer-membrane lipoprotein LolB.